A 51-amino-acid polypeptide reads, in one-letter code: Basic phospholipase A2 Bfon11 (51 aa).

Tyrosine 27, glycine 29, and glycine 31 together coordinate Ca(2+). Cysteine 28 and cysteine 43 are oxidised to a cystine. Histidine 46 is a catalytic residue. Position 47 (aspartate 47) interacts with Ca(2+).

Belongs to the phospholipase A2 family. Group II subfamily. D49 sub-subfamily. The cofactor is Ca(2+). Expressed by the venom gland.

The protein localises to the secreted. It carries out the reaction a 1,2-diacyl-sn-glycero-3-phosphocholine + H2O = a 1-acyl-sn-glycero-3-phosphocholine + a fatty acid + H(+). In terms of biological role, snake venom phospholipase A2 (PLA2) that impairs hemostasis. PLA2 catalyzes the calcium-dependent hydrolysis of the 2-acyl groups in 3-sn-phosphoglycerides. The polypeptide is Basic phospholipase A2 Bfon11 (Bothrops fonsecai (Fonseca's lancehead)).